A 630-amino-acid polypeptide reads, in one-letter code: Amino acid transporter heavy chain SLC3A2 (630 aa).

Met-1 carries the post-translational modification N-acetylmethionine. Position 2 is an N-acetylserine (Glu-2). Glu-2 carries the post-translational modification Phosphoserine. Positions 15 to 39 (IPRQLPGSHSEAGVQGLSAGDDSEL) are disordered. At 102–184 (MSQDTEVDMK…SPGWVRTRWA (83 aa)) the chain is on the cytoplasmic side. Phosphoserine is present on Ser-103. Residue Thr-106 is modified to Phosphothreonine. At Ser-134 the chain carries Phosphoserine. Lys-147 is covalently cross-linked (Glycyl lysine isopeptide (Lys-Gly) (interchain with G-Cter in ubiquitin)). Ser-165 carries the phosphoserine modification. Lys-166 is covalently cross-linked (Glycyl lysine isopeptide (Lys-Gly) (interchain with G-Cter in SUMO2)). The chain crosses the membrane as a helical; Signal-anchor for type II membrane protein span at residues 185 to 205 (LLLLFWLGWLGMLAGAVVIIV). Over 206-630 (RAPRCRELPA…GLLLRFPYAA (425 aa)) the chain is Extracellular. 2 N-linked (GlcNAc...) asparagine glycosylation sites follow: Asn-365 and Asn-381. Phosphoserine occurs at positions 406, 408, and 410. Asn-424 carries N-linked (GlcNAc...) (complex) asparagine glycosylation. An N-linked (GlcNAc...) asparagine glycan is attached at Asn-506. Phosphoserine is present on residues Ser-527 and Ser-531.

Disulfide-linked heterodimer with a non-glycosylated catalytic light subunit (SLC7A5, SLC7A6, SLC7A7, SLC7A8, SLC7A10 or SLC7A11). Interacts with TLCD3A/CT120. Interacts with ICAM1. Constitutively and specifically associates with beta-1 integrins (alpha-2/beta-1, alpha-3/beta-1, alpha-5/beta-1 and alpha-6/beta-1), but minimally with alpha-4/beta-1. Interacts with LAPTM4B; recruits SLC3A2 and SLC7A5/LAT1 to lysosomes to promote leucine uptake into these organelles and is required for mTORC1 activation. As to quaternary structure, (Microbial infection) Interacts with hepatitis C virus/HCV envelope glycoprotein E2; the interaction may facilitate viral entry into host cell. N-glycosylated; N-glycosylation is crucial for trafficking and stability of SLC3A2 to the plasma membrane. In terms of processing, phosphorylation on Ser-406; Ser-408 or Ser-410 and on Ser-527 or Ser-531 by ecto-protein kinases favors heterotypic cell-cell interactions. As to expression, expressed ubiquitously in all tissues tested with highest levels detected in kidney, placenta and testis and weakest level in thymus. During gestation, expression in the placenta was significantly stronger at full-term than at the mid-trimester stage. Expressed in HUVECS and at low levels in resting peripheral blood T-lymphocytes and quiescent fibroblasts. Also expressed in fetal liver and in the astrocytic process of primary astrocytic gliomas. Expressed in retinal endothelial cells and in the intestinal epithelial cell line C2BBe1.

The protein resides in the apical cell membrane. Its subcellular location is the cell membrane. It is found in the cell junction. It localises to the lysosome membrane. The protein localises to the melanosome. The protein resides in the basolateral cell membrane. Functionally, acts as a chaperone that facilitates biogenesis and trafficking of functional transporters heterodimers to the plasma membrane. Forms heterodimer with SLC7 family transporters (SLC7A5, SLC7A6, SLC7A7, SLC7A8, SLC7A10 and SLC7A11), a group of amino-acid antiporters. Heterodimers function as amino acids exchangers, the specificity of the substrate depending on the SLC7A subunit. Heterodimers SLC3A2/SLC7A6 or SLC3A2/SLC7A7 mediate the uptake of dibasic amino acids. Heterodimer SLC3A2/SLC7A11 functions as an antiporter by mediating the exchange of extracellular anionic L-cystine and intracellular L-glutamate across the cellular plasma membrane. SLC3A2/SLC7A10 translocates small neutral L- and D-amino acids across the plasma membrane. SLC3A2/SLC75 or SLC3A2/SLC7A8 translocates neutral amino acids with broad specificity, thyroid hormones and L-DOPA. SLC3A2 is essential for plasma membrane localization, stability, and the transport activity of SLC7A5 and SLC7A8. When associated with LAPTM4B, the heterodimer SLC7A5 is recruited to lysosomes to promote leucine uptake into these organelles, and thereby mediates mTORC1 activation. Modulates integrin-related signaling and is essential for integrin-dependent cell spreading, migration and tumor progression. In terms of biological role, (Microbial infection) In case of hepatitis C virus/HCV infection, the complex formed by SLC3A2 and SLC7A5/LAT1 plays a role in HCV propagation by facilitating viral entry into host cell and increasing L-leucine uptake-mediated mTORC1 signaling activation, thereby contributing to HCV-mediated pathogenesis. Its function is as follows. (Microbial infection) Acts as a receptor for malaria parasite Plasmodium vivax (Thai isolate) in immature red blood cells. The chain is Amino acid transporter heavy chain SLC3A2 from Homo sapiens (Human).